A 780-amino-acid chain; its full sequence is ATP-dependent 6-phosphofructokinase, muscle type (780 aa).

Thr-2 bears the N-acetylthreonine mark. The tract at residues 2-390 (THEEHHAAKT…NWEVYKLLAH (389 aa)) is N-terminal catalytic PFK domain 1. ATP contacts are provided by residues Gly-25, 88–89 (RC), and 118–121 (GDGS). Position 119 (Asp-119) interacts with Mg(2+). Ser-133 carries the post-translational modification Phosphoserine. Substrate is bound by residues 164-166 (SID), Arg-201, 208-210 (MGR), Glu-264, Arg-292, and 298-301 (HVQR). Catalysis depends on Asp-166, which acts as the Proton acceptor. Ser-377 carries the post-translational modification Phosphoserine. The tract at residues 391–401 (VRPPVSKSGSH) is interdomain linker. A C-terminal regulatory PFK domain 2 region spans residues 402 to 780 (TVAVMNVGAP…TRKRSGEAAV (379 aa)). Residues Arg-471 and 528–532 (TVSNN) each bind beta-D-fructose 2,6-bisphosphate. An O-linked (GlcNAc) serine glycan is attached at Ser-530. The residue at position 557 (Lys-557) is an N6-(2-hydroxyisobutyryl)lysine. Beta-D-fructose 2,6-bisphosphate-binding positions include Arg-566, 573-575 (MGG), Glu-629, Arg-655, and 661-664 (HMQQ). Residue Ser-667 is modified to Phosphoserine. Arg-735 is a binding site for beta-D-fructose 2,6-bisphosphate. Position 775 is a phosphoserine (Ser-775).

The protein belongs to the phosphofructokinase type A (PFKA) family. ATP-dependent PFK group I subfamily. Eukaryotic two domain clade 'E' sub-subfamily. Homo- and heterotetramers. Phosphofructokinase (PFK) enzyme functions as a tetramer composed of different combinations of 3 types of subunits, called PFKM (where M stands for Muscle), PFKL (Liver) and PFKP (Platelet). The composition of the PFK tetramer differs according to the tissue type it is present in. In muscles, it is composed of 4 PFKM subunits (also called M4). In the liver, the predominant form is a tetramer of PFKL subunits (L4). In erythrocytes, both PFKM and PFKL subunits randomly tetramerize to form M4, L4 and other combinations (ML3, M2L2, M3L). The kinetic and regulatory properties of the tetrameric enzyme are dependent on the subunit composition, hence can vary across tissues. Interacts (via C-terminus) with HK1 (via N-terminal spermatogenic cell-specific region). Mg(2+) is required as a cofactor. In terms of processing, glcNAcylation decreases enzyme activity.

The protein localises to the cytoplasm. It catalyses the reaction beta-D-fructose 6-phosphate + ATP = beta-D-fructose 1,6-bisphosphate + ADP + H(+). Its pathway is carbohydrate degradation; glycolysis; D-glyceraldehyde 3-phosphate and glycerone phosphate from D-glucose: step 3/4. Allosterically activated by ADP, AMP, or fructose 2,6-bisphosphate, and allosterically inhibited by ATP or citrate. Its function is as follows. Catalyzes the phosphorylation of D-fructose 6-phosphate to fructose 1,6-bisphosphate by ATP, the first committing step of glycolysis. The chain is ATP-dependent 6-phosphofructokinase, muscle type (PFKM) from Homo sapiens (Human).